The chain runs to 227 residues: Probable N-acetyltransferase family 8 member 5 (227 aa).

The next 3 membrane-spanning stretches (helical) occupy residues 29–49 (IPAA…LFVM), 53–73 (IVLV…LLLL), and 201–221 (ISII…SFPS). The 145-residue stretch at 69-213 (FLLLLLRLLA…IKWLITFSII (145 aa)) folds into the N-acetyltransferase domain.

The protein belongs to the camello family.

The protein resides in the membrane. Its function is as follows. May play a role in regulation of gastrulation. The chain is Probable N-acetyltransferase family 8 member 5 from Mus musculus (Mouse).